The primary structure comprises 163 residues: ATP synthase subunit b (163 aa).

Residues 1–21 traverse the membrane as a helical segment; the sequence is MISFNLTSIVNLVGFLAFMFL.

It belongs to the ATPase B chain family. As to quaternary structure, F-type ATPases have 2 components, F(1) - the catalytic core - and F(0) - the membrane proton channel. F(1) has five subunits: alpha(3), beta(3), gamma(1), delta(1), epsilon(1). F(0) has three main subunits: a(1), b(2) and c(10-14). The alpha and beta chains form an alternating ring which encloses part of the gamma chain. F(1) is attached to F(0) by a central stalk formed by the gamma and epsilon chains, while a peripheral stalk is formed by the delta and b chains.

It is found in the cell inner membrane. Its function is as follows. F(1)F(0) ATP synthase produces ATP from ADP in the presence of a proton or sodium gradient. F-type ATPases consist of two structural domains, F(1) containing the extramembraneous catalytic core and F(0) containing the membrane proton channel, linked together by a central stalk and a peripheral stalk. During catalysis, ATP synthesis in the catalytic domain of F(1) is coupled via a rotary mechanism of the central stalk subunits to proton translocation. Component of the F(0) channel, it forms part of the peripheral stalk, linking F(1) to F(0). This chain is ATP synthase subunit b, found in Petrotoga mobilis (strain DSM 10674 / SJ95).